The following is a 206-amino-acid chain: LexA repressor (206 aa).

Positions 28-48 form a DNA-binding region, H-T-H motif; sequence RAEIARELGFRSANAAEEHLK. Active-site for autocatalytic cleavage activity residues include serine 123 and lysine 160.

Belongs to the peptidase S24 family. Homodimer.

The catalysed reaction is Hydrolysis of Ala-|-Gly bond in repressor LexA.. Functionally, represses a number of genes involved in the response to DNA damage (SOS response), including recA and lexA. In the presence of single-stranded DNA, RecA interacts with LexA causing an autocatalytic cleavage which disrupts the DNA-binding part of LexA, leading to derepression of the SOS regulon and eventually DNA repair. This is LexA repressor from Vibrio atlanticus (strain LGP32) (Vibrio splendidus (strain Mel32)).